Consider the following 308-residue polypeptide: Staphylococcal superantigen-like 4 (308 aa).

The signal sequence occupies residues 1–30 (MKITTIAKTSLALGLLTTGVITTTTQAANA). The disordered stretch occupies residues 28 to 117 (ANATTPSSTK…TTKQVPTEIN (90 aa)). Polar residues-rich tracts occupy residues 33 to 47 (PSST…TPPS) and 55 to 76 (SKPN…TANA). Low complexity predominate over residues 77 to 93 (TTPPSTKVTTPPSTNTP). Positions 94–114 (QPMQSTKSDTPQSPTTKQVPT) are enriched in polar residues. The sialyl Lewis X-binding stretch occupies residues 180–278 (VDVFVVLEEN…VIKMKNGGKY (99 aa)).

The protein belongs to the staphylococcal/streptococcal toxin family.

It localises to the secreted. Its function is as follows. Secreted protein that plays a role in immune innate response inhibition by interfering with host TLR2-mediated pathway. The chain is Staphylococcal superantigen-like 4 from Staphylococcus aureus (strain Newman).